The chain runs to 285 residues: tRNA-cytidine(32) 2-sulfurtransferase (285 aa).

The PP-loop motif signature appears at 49 to 54 (SGGKDS). [4Fe-4S] cluster contacts are provided by C124, C127, and C215.

Belongs to the TtcA family. Homodimer. Mg(2+) serves as cofactor. The cofactor is [4Fe-4S] cluster.

It localises to the cytoplasm. It carries out the reaction cytidine(32) in tRNA + S-sulfanyl-L-cysteinyl-[cysteine desulfurase] + AH2 + ATP = 2-thiocytidine(32) in tRNA + L-cysteinyl-[cysteine desulfurase] + A + AMP + diphosphate + H(+). It functions in the pathway tRNA modification. Its function is as follows. Catalyzes the ATP-dependent 2-thiolation of cytidine in position 32 of tRNA, to form 2-thiocytidine (s(2)C32). The sulfur atoms are provided by the cysteine/cysteine desulfurase (IscS) system. The protein is tRNA-cytidine(32) 2-sulfurtransferase of Hahella chejuensis (strain KCTC 2396).